The chain runs to 195 residues: Fe/S biogenesis protein NfuA (195 aa).

2 residues coordinate [4Fe-4S] cluster: cysteine 152 and cysteine 155.

The protein belongs to the NfuA family. In terms of assembly, homodimer. [4Fe-4S] cluster serves as cofactor.

Involved in iron-sulfur cluster biogenesis. Binds a 4Fe-4S cluster, can transfer this cluster to apoproteins, and thereby intervenes in the maturation of Fe/S proteins. Could also act as a scaffold/chaperone for damaged Fe/S proteins. The polypeptide is Fe/S biogenesis protein NfuA (Vibrio cholerae serotype O1 (strain ATCC 39315 / El Tor Inaba N16961)).